Consider the following 247-residue polypeptide: Ribonuclease PH (247 aa).

Phosphate is bound by residues arginine 87 and 125-127 (GTR).

It belongs to the RNase PH family. As to quaternary structure, homohexameric ring arranged as a trimer of dimers.

It carries out the reaction tRNA(n+1) + phosphate = tRNA(n) + a ribonucleoside 5'-diphosphate. Functionally, phosphorolytic 3'-5' exoribonuclease that plays an important role in tRNA 3'-end maturation. Removes nucleotide residues following the 3'-CCA terminus of tRNAs; can also add nucleotides to the ends of RNA molecules by using nucleoside diphosphates as substrates, but this may not be physiologically important. Probably plays a role in initiation of 16S rRNA degradation (leading to ribosome degradation) during starvation. The polypeptide is Ribonuclease PH (Nostoc sp. (strain PCC 7120 / SAG 25.82 / UTEX 2576)).